A 166-amino-acid polypeptide reads, in one-letter code: Transcriptional repressor NrdR (166 aa).

A zinc finger lies at 3–34; the sequence is CIKCGNMEDKVIDSRPIKEGKSIRRRRECLRC. Residues 49 to 139 form the ATP-cone domain; it reads LFVKKRNGSI…VYCKFHDAKD (91 aa).

It belongs to the NrdR family. Zn(2+) serves as cofactor.

In terms of biological role, negatively regulates transcription of bacterial ribonucleotide reductase nrd genes and operons by binding to NrdR-boxes. This chain is Transcriptional repressor NrdR, found in Methylacidiphilum infernorum (isolate V4) (Methylokorus infernorum (strain V4)).